The sequence spans 451 residues: Phosphoglucosamine mutase (451 aa).

The active-site Phosphoserine intermediate is Ser101. Residues Ser101, Asp243, Asp245, and Asp247 each coordinate Mg(2+). Phosphoserine is present on Ser101.

This sequence belongs to the phosphohexose mutase family. Mg(2+) serves as cofactor. Post-translationally, activated by phosphorylation.

It carries out the reaction alpha-D-glucosamine 1-phosphate = D-glucosamine 6-phosphate. Functionally, catalyzes the conversion of glucosamine-6-phosphate to glucosamine-1-phosphate. The chain is Phosphoglucosamine mutase from Geobacter metallireducens (strain ATCC 53774 / DSM 7210 / GS-15).